Here is a 211-residue protein sequence, read N- to C-terminus: Large ribosomal subunit protein uL3 (211 aa).

Residue Q150 is modified to N5-methylglutamine.

This sequence belongs to the universal ribosomal protein uL3 family. In terms of assembly, part of the 50S ribosomal subunit. Forms a cluster with proteins L14 and L19. In terms of processing, methylated by PrmB.

Its function is as follows. One of the primary rRNA binding proteins, it binds directly near the 3'-end of the 23S rRNA, where it nucleates assembly of the 50S subunit. This is Large ribosomal subunit protein uL3 from Pseudomonas fluorescens (strain Pf0-1).